Here is a 171-residue protein sequence, read N- to C-terminus: Large ribosomal subunit protein uL10 (171 aa).

Belongs to the universal ribosomal protein uL10 family. As to quaternary structure, part of the ribosomal stalk of the 50S ribosomal subunit. The N-terminus interacts with L11 and the large rRNA to form the base of the stalk. The C-terminus forms an elongated spine to which L12 dimers bind in a sequential fashion forming a multimeric L10(L12)X complex.

Forms part of the ribosomal stalk, playing a central role in the interaction of the ribosome with GTP-bound translation factors. The polypeptide is Large ribosomal subunit protein uL10 (Sphingopyxis alaskensis (strain DSM 13593 / LMG 18877 / RB2256) (Sphingomonas alaskensis)).